A 68-amino-acid polypeptide reads, in one-letter code: Conotoxin Lp5.2 (68 aa).

An N-terminal signal peptide occupies residues 1-19; the sequence is MRCVPVFIILLLLASPAAP. A propeptide spanning residues 20–54 is cleaved from the precursor; sequence KSLETRIQNDLIRAGLTDADLKTEKGFLSGLLNVA.

The protein belongs to the conotoxin T superfamily. Post-translationally, contains 2 disulfide bonds that can be either 'C1-C3, C2-C4' or 'C1-C4, C2-C3', since these disulfide connectivities have been observed for conotoxins with cysteine framework V (for examples, see AC P0DQQ7 and AC P81755). Expressed by the venom duct.

Its subcellular location is the secreted. In Conus leopardus (Leopard cone), this protein is Conotoxin Lp5.2.